The sequence spans 402 residues: MESKDWVAGISKSDAGRYSRQLLVDDFGVSGQKNLKNTAVLIVGAGGLGCPVATYLGAAGVGTLGIVDYDRISLDNLHRQVAYKEDQVGQSKSQGLADNVKLQNSGVTTVVHNVSLDSSNAMEIFKNYDIVCDCTDNVATRYLINDVCVLLNIPLVSGSALRWDGQLSVYHYGPDCPCYRCLFPSPPDPSSVTNCNEGGVLGPIVGTIGSMQALEVMKIAAKLSTTLAGKLLLFDGREGKSRTIRLRKRDPKCAVCGDEPSITAPIDYMLFCGAGAHDKIENLKLLEPSVRVNVHEYQEIRSAARKQFLLDTRPPVEFEIAHLPEAIDITLNECRSLQAEELSSRLGVDSQTSDVYVICHRGNDSQRAVKLLKEKLGSIHFRDIIGGYEEWALKINDEFPLY.

Residues Gly-47, Asp-68, 75–79 (DNLHR), Lys-92, and 136–137 (DN) contribute to the ATP site. Residues Cys-178 and Cys-181 each coordinate Zn(2+). Residue Cys-195 is the Glycyl thioester intermediate; for adenylyltransferase activity of the active site. Residues Cys-253 and Cys-256 each contribute to the Zn(2+) site. The region spanning 303 to 400 (AARKQFLLDT…WALKINDEFP (98 aa)) is the Rhodanese domain. Cys-359 (cysteine persulfide intermediate; for sulfurtransferase activity) is an active-site residue.

In the N-terminal section; belongs to the HesA/MoeB/ThiF family. UBA4 subfamily. It depends on Zn(2+) as a cofactor.

Its subcellular location is the cytoplasm. It localises to the cytosol. It catalyses the reaction [molybdopterin-synthase sulfur-carrier protein]-C-terminal Gly-Gly + ATP + H(+) = [molybdopterin-synthase sulfur-carrier protein]-C-terminal Gly-Gly-AMP + diphosphate. The enzyme catalyses [molybdopterin-synthase sulfur-carrier protein]-C-terminal Gly-Gly-AMP + S-sulfanyl-L-cysteinyl-[cysteine desulfurase] + AH2 = [molybdopterin-synthase sulfur-carrier protein]-C-terminal-Gly-aminoethanethioate + L-cysteinyl-[cysteine desulfurase] + A + AMP + 2 H(+). Its pathway is tRNA modification; 5-methoxycarbonylmethyl-2-thiouridine-tRNA biosynthesis. The protein operates within cofactor biosynthesis; molybdopterin biosynthesis. Functionally, plays a central role in 2-thiolation of mcm(5)S(2)U at tRNA wobble positions of cytosolic tRNA(Lys), tRNA(Glu) and tRNA(Gln). Also essential during biosynthesis of the molybdenum cofactor. Acts by mediating the C-terminal thiocarboxylation of sulfur carriers URM1 and MOCS2A. Its N-terminus first activates URM1 and MOCS2A as acyl-adenylates (-COAMP), then the persulfide sulfur on the catalytic cysteine is transferred to URM1 and MOCS2A to form thiocarboxylation (-COSH) of their C-terminus. The reaction probably involves hydrogen sulfide that is generated from the persulfide intermediate and that acts as a nucleophile towards URM1 and MOCS2A. Subsequently, a transient disulfide bond is formed. Does not use thiosulfate as sulfur donor; NFS1 probably acting as a sulfur donor for thiocarboxylation reactions. In Caenorhabditis briggsae, this protein is Adenylyltransferase and sulfurtransferase MOCS3.